The chain runs to 281 residues: MEMO1 family protein Pars_0062 (281 aa).

The protein belongs to the MEMO1 family.

The polypeptide is MEMO1 family protein Pars_0062 (Pyrobaculum arsenaticum (strain DSM 13514 / JCM 11321 / PZ6)).